The primary structure comprises 93 residues: Putative hemolysin E-like protein (93 aa).

This sequence belongs to the hemolysin E family.

The polypeptide is Putative hemolysin E-like protein (Escherichia coli O6:H1 (strain CFT073 / ATCC 700928 / UPEC)).